The chain runs to 909 residues: E3 ubiquitin-protein ligase HACE1 (909 aa).

Residues 1–21 (MERAMEQLNRLTRSLRRARTV) form an N-terminal helix important for homodimerization region. 7 ANK repeats span residues 23-55 (LPED…NSKF), 64-93 (VKRS…NPNY), 97-126 (SGCT…DVNI), 130-159 (EGLT…DVDV), 163-192 (MGQT…DINR), 196-226 (SGAT…YLPD), and 228-253 (NGVT…QYHP). Positions 398–433 (QDQDAASIPPFEPPGPGSYENLSTGTRESKPDALAG) are disordered. Residues 574 to 909 (NCAKLKQGIA…HCGSYGYTMA (336 aa)) form the HECT domain. Cysteine 876 serves as the catalytic Glycyl thioester intermediate.

In terms of assembly, homodimer. The homodimer is autoinhibited and stabilized by its N-terminal helix. Interacts with RAB1 (RAB1A, RAB1B or RAB1C), RAB4 (RAB4A or RAB4B) and RAB11 (RAB11A or RAB11B); in a GTP-dependent manner. Interacts with the 26S proteasomal complex through the 20S core proteasomal subunit. Interacts with RARB. In terms of processing, autoubiquitinated. In terms of tissue distribution, expressed in multiple tissues including heart, brain and kidney.

The protein localises to the golgi apparatus. The protein resides in the golgi stack membrane. It is found in the cytoplasm. Its subcellular location is the endoplasmic reticulum. It carries out the reaction S-ubiquitinyl-[E2 ubiquitin-conjugating enzyme]-L-cysteine + [acceptor protein]-L-lysine = [E2 ubiquitin-conjugating enzyme]-L-cysteine + N(6)-ubiquitinyl-[acceptor protein]-L-lysine.. The protein operates within protein modification; protein ubiquitination. Its activity is regulated as follows. Sterically autoinhibited in its dimeric state. E3 ubiquitin-protein ligase involved in Golgi membrane fusion and regulation of small GTPases. Acts as a regulator of Golgi membrane dynamics during the cell cycle: recruited to Golgi membrane by Rab proteins and regulates postmitotic Golgi membrane fusion. Acts by mediating ubiquitination during mitotic Golgi disassembly, ubiquitination serving as a signal for Golgi reassembly later, after cell division. Specifically binds GTP-bound RAC1, mediating ubiquitination and subsequent degradation of active RAC1, thereby playing a role in host defense against pathogens. May also act as a transcription regulator via its interaction with RARB. The chain is E3 ubiquitin-protein ligase HACE1 (HACE1) from Homo sapiens (Human).